A 412-amino-acid chain; its full sequence is Argininosuccinate synthase (412 aa).

ATP is bound by residues 16–24 and Ala-44; that span reads AYSGGLDTS. 2 residues coordinate L-citrulline: Tyr-96 and Ser-101. Position 126 (Gly-126) interacts with ATP. L-aspartate is bound by residues Thr-128, Asn-132, and Asp-133. Asn-132 is an L-citrulline binding site. Residues Arg-136, Ser-185, Ser-194, Glu-270, and Tyr-282 each contribute to the L-citrulline site.

It belongs to the argininosuccinate synthase family. Type 1 subfamily. Homotetramer.

It localises to the cytoplasm. It carries out the reaction L-citrulline + L-aspartate + ATP = 2-(N(omega)-L-arginino)succinate + AMP + diphosphate + H(+). It participates in amino-acid biosynthesis; L-arginine biosynthesis; L-arginine from L-ornithine and carbamoyl phosphate: step 2/3. The polypeptide is Argininosuccinate synthase (Shewanella baltica (strain OS185)).